We begin with the raw amino-acid sequence, 91 residues long: RING finger protein Z (91 aa).

Residue Gly-2 is the site of N-myristoyl glycine; by host attachment. An RING-type; atypical zinc finger spans residues 35 to 71 (CKCCWFQDKNLVECSDHYLCLKCISSMLKRGKNCEIC). Positions 85 to 88 (PTAP) match the PTAP/PSAP motif motif.

It belongs to the arenaviridae Z protein family. As to quaternary structure, interacts with protein NP; this interaction probably directs the encapsidated genome to budding sites. Interacts (via RING domain) with polymerase L; this interaction inhibits viral transcription and replication, Z partially blocks the product exit tunnel for the releasing nascent RNA product. Interacts with the glycoprotein complex; this interaction plays a role in virion budding. Interacts with host eIF4E; this interaction results in eIF4E reduced affinity for its substrate, the 5'-m7 G cap structure. Interacts (via late-budding domain) with host TSG101; this interaction is essential for budding and release of viral particles. Interacts with host RPLP0; this interaction may serve to load ribosome-like particles inside the virion. Interacts with host PML; this interaction induces PML bodies redistribution in the cytoplasm upon viral infection. In terms of processing, myristoylation is required for the role of RING finger protein Z in assembly and budding.

The protein localises to the virion. Its subcellular location is the host cytoplasm. It is found in the host perinuclear region. The protein resides in the host cell membrane. Plays a crucial role in virion assembly and budding. Expressed late in the virus life cycle, it acts as an inhibitor of viral transcription and RNA synthesis by interacting with the viral polymerase L. Presumably recruits the NP encapsidated genome to cellular membranes at budding sites via direct interaction with NP. Plays critical roles in the final steps of viral release by interacting with host TSG101, a member of the vacuolar protein-sorting pathway and using other cellular host proteins involved in vesicle formation pathway. The budding of the virus progeny occurs after association of protein Z with the viral glycoprotein complex SSP-GP1-GP2 at the cell periphery, step that requires myristoylation of protein Z. Also selectively represses protein production by associating with host eIF4E. In cell-based minigenome assay, has an inhibitory effect on the ribonucleoprotein machinery (vRNP), which is responsible for the replication and transcription of the viral genome. This Latino mammarenavirus (isolate Rat/Bolivia/MARU 1924/1965) (LATV) protein is RING finger protein Z.